Consider the following 146-residue polypeptide: MYPAHLLVLLAVCVSLLGAASIPPLPLNLVQFSYVITCANHNRRSSLDYADYGCYCGAGGSGTPVDELDRCCKIHDDCYGEAEKQGCYPKMLIYDYDCGSNGPYCKNVTKKCNRKVCDCDVAAAKCFARNAYNNANYNIDTKKRCK.

An N-terminal signal peptide occupies residues 1-19; sequence MYPAHLLVLLAVCVSLLGA. The propeptide occupies 20–27; the sequence is ASIPPLPL. Cystine bridges form between cysteine 38–cysteine 98, cysteine 54–cysteine 145, cysteine 56–cysteine 72, cysteine 71–cysteine 126, cysteine 78–cysteine 119, cysteine 87–cysteine 112, and cysteine 105–cysteine 117. Ca(2+) contacts are provided by tyrosine 55, glycine 57, and glycine 59. Histidine 75 is a catalytic residue. Residue aspartate 76 participates in Ca(2+) binding. Aspartate 120 is an active-site residue.

This sequence belongs to the phospholipase A2 family. Group I subfamily. D49 sub-subfamily. The cofactor is Ca(2+). In terms of tissue distribution, expressed by the venom gland.

It is found in the secreted. The enzyme catalyses a 1,2-diacyl-sn-glycero-3-phosphocholine + H2O = a 1-acyl-sn-glycero-3-phosphocholine + a fatty acid + H(+). Functionally, snake venom phospholipase A2 (PLA2) that inhibits neuromuscular transmission by blocking acetylcholine release from the nerve termini. PLA2 catalyzes the calcium-dependent hydrolysis of the 2-acyl groups in 3-sn-phosphoglycerides. This chain is Basic phospholipase A2 73, found in Hydrophis hardwickii (Hardwick's spine-bellied seasnake).